A 729-amino-acid polypeptide reads, in one-letter code: Phosphoribosylformylglycinamidine synthase subunit PurL (729 aa).

His42 is a catalytic residue. Positions 45 and 84 each coordinate ATP. Residue Glu86 participates in Mg(2+) binding. Residues 87–90 (SHNH) and Arg109 each bind substrate. Residue His88 is the Proton acceptor of the active site. Asp110 lines the Mg(2+) pocket. A substrate-binding site is contributed by Gln238. Residue Asp266 participates in Mg(2+) binding. 310-312 (ESQ) lines the substrate pocket. ATP contacts are provided by Asp492 and Gly529. Asn530 is a Mg(2+) binding site. Ser532 contacts substrate.

It belongs to the FGAMS family. As to quaternary structure, monomer. Part of the FGAM synthase complex composed of 1 PurL, 1 PurQ and 2 PurS subunits.

It localises to the cytoplasm. It catalyses the reaction N(2)-formyl-N(1)-(5-phospho-beta-D-ribosyl)glycinamide + L-glutamine + ATP + H2O = 2-formamido-N(1)-(5-O-phospho-beta-D-ribosyl)acetamidine + L-glutamate + ADP + phosphate + H(+). The protein operates within purine metabolism; IMP biosynthesis via de novo pathway; 5-amino-1-(5-phospho-D-ribosyl)imidazole from N(2)-formyl-N(1)-(5-phospho-D-ribosyl)glycinamide: step 1/2. Its function is as follows. Part of the phosphoribosylformylglycinamidine synthase complex involved in the purines biosynthetic pathway. Catalyzes the ATP-dependent conversion of formylglycinamide ribonucleotide (FGAR) and glutamine to yield formylglycinamidine ribonucleotide (FGAM) and glutamate. The FGAM synthase complex is composed of three subunits. PurQ produces an ammonia molecule by converting glutamine to glutamate. PurL transfers the ammonia molecule to FGAR to form FGAM in an ATP-dependent manner. PurS interacts with PurQ and PurL and is thought to assist in the transfer of the ammonia molecule from PurQ to PurL. In Campylobacter curvus (strain 525.92), this protein is Phosphoribosylformylglycinamidine synthase subunit PurL.